A 116-amino-acid chain; its full sequence is Ribosome-binding factor A (116 aa).

The protein belongs to the RbfA family. Monomer. Binds 30S ribosomal subunits, but not 50S ribosomal subunits or 70S ribosomes.

It localises to the cytoplasm. Its function is as follows. One of several proteins that assist in the late maturation steps of the functional core of the 30S ribosomal subunit. Associates with free 30S ribosomal subunits (but not with 30S subunits that are part of 70S ribosomes or polysomes). Required for efficient processing of 16S rRNA. May interact with the 5'-terminal helix region of 16S rRNA. The sequence is that of Ribosome-binding factor A from Clostridium botulinum (strain Eklund 17B / Type B).